The chain runs to 166 residues: Putative peroxiredoxin (166 aa).

The 166-residue stretch at 1–166 (EIGSTIPNAT…SSAATVLSKL (166 aa)) folds into the Thioredoxin domain. The active-site Cysteine sulfenic acid (-SOH) intermediate is Cys-56. The Microbody targeting signal motif lies at 164–166 (SKL).

The protein belongs to the peroxiredoxin family. Prx5 subfamily. As to quaternary structure, homodimer; disulfide-linked, upon oxidation.

The enzyme catalyses a hydroperoxide + [thioredoxin]-dithiol = an alcohol + [thioredoxin]-disulfide + H2O. Functionally, thiol-specific peroxidase that catalyzes the reduction of hydrogen peroxide and organic hydroperoxides to water and alcohols, respectively. Plays a role in cell protection against oxidative stress by detoxifying peroxides and as sensor of hydrogen peroxide-mediated signaling events. This chain is Putative peroxiredoxin, found in Malassezia furfur (Pityriasis versicolor infection agent).